Here is a 269-residue protein sequence, read N- to C-terminus: Protein MrkE (269 aa).

A Response regulatory domain is found at 59–173 (KVIIVEDEFL…RIINMLQKLT (115 aa)). A 4-aspartylphosphate modification is found at Asp-110. Residues 197–269 (INLIKDERII…VAQVSIANRF (73 aa)) enclose the HTH LytTR-type domain.

In terms of biological role, may be involved in the regulation of fimbrial expression. This chain is Protein MrkE (mrkE), found in Klebsiella pneumoniae.